Consider the following 233-residue polypeptide: MVKVGLVDDYRVDLEKLEAIVSRMQDVEIVFSTDSAKEAYRRVKNGDIDLLLADIEMPHMSGYELADLIKSHSLDVDVIFVTGHGGYAVHAFDLNVHDYIMKPYYADRLAASFDRYLKKKTETSLNGRILIKQKSEMHVLQKKDIIFAERTGRSTTIVTTAEEVQTYQTLNDIKGDLPEKDFLRSHRSFIINIHYIKHFSAYTKHSFTVSFEGTSKKAMITKQQLDYFQNYYF.

In terms of domain architecture, Response regulatory spans 3–117 (KVGLVDDYRV…RLAASFDRYL (115 aa)). Aspartate 54 is subject to 4-aspartylphosphate. An HTH LytTR-type domain is found at 129–233 (ILIKQKSEMH…QLDYFQNYYF (105 aa)).

In terms of processing, phosphorylated by NatK.

It localises to the cytoplasm. Member of the two-component regulatory system NatK/NatR that positively regulates the expression of the natAB operon. Acts by binding directly to the promoter of natAB. The polypeptide is Transcriptional regulatory protein NatR (Bacillus subtilis (strain 168)).